A 184-amino-acid chain; its full sequence is Elongation factor P (184 aa).

The protein belongs to the elongation factor P family.

The protein localises to the cytoplasm. It functions in the pathway protein biosynthesis; polypeptide chain elongation. In terms of biological role, involved in peptide bond synthesis. Stimulates efficient translation and peptide-bond synthesis on native or reconstituted 70S ribosomes in vitro. Probably functions indirectly by altering the affinity of the ribosome for aminoacyl-tRNA, thus increasing their reactivity as acceptors for peptidyl transferase. This is Elongation factor P from Delftia acidovorans (strain DSM 14801 / SPH-1).